The following is a 193-amino-acid chain: Probable nicotinate-nucleotide adenylyltransferase (193 aa).

It belongs to the NadD family.

It catalyses the reaction nicotinate beta-D-ribonucleotide + ATP + H(+) = deamido-NAD(+) + diphosphate. It functions in the pathway cofactor biosynthesis; NAD(+) biosynthesis; deamido-NAD(+) from nicotinate D-ribonucleotide: step 1/1. In terms of biological role, catalyzes the reversible adenylation of nicotinate mononucleotide (NaMN) to nicotinic acid adenine dinucleotide (NaAD). The sequence is that of Probable nicotinate-nucleotide adenylyltransferase from Borreliella afzelii (strain PKo) (Borrelia afzelii).